The chain runs to 918 residues: Valine--tRNA ligase (918 aa).

Positions 50 to 60 match the 'HIGH' region motif; that stretch reads PNVTGSLHMGH. Residues 548–552 carry the 'KMSKS' region motif; that stretch reads KMSKS. Position 551 (Lys-551) interacts with ATP. Residues 849–883 adopt a coiled-coil conformation; the sequence is NDFVNLEALKDRLTKDLKKVNSDIETLNKRISNKN.

The protein belongs to the class-I aminoacyl-tRNA synthetase family. ValS type 1 subfamily. As to quaternary structure, monomer.

The protein localises to the cytoplasm. The catalysed reaction is tRNA(Val) + L-valine + ATP = L-valyl-tRNA(Val) + AMP + diphosphate. Its function is as follows. Catalyzes the attachment of valine to tRNA(Val). As ValRS can inadvertently accommodate and process structurally similar amino acids such as threonine, to avoid such errors, it has a 'posttransfer' editing activity that hydrolyzes mischarged Thr-tRNA(Val) in a tRNA-dependent manner. In Prochlorococcus marinus subsp. pastoris (strain CCMP1986 / NIES-2087 / MED4), this protein is Valine--tRNA ligase.